The following is a 308-amino-acid chain: MSEQFLYFLQQMFNGVTLGSTYALIAIGYTMVYGIIGMINFAHGEVYMIGSYVSFMIIAALMMMGIDTGWLLVAAGFVGAIVIASAYGWSIERVAYRPVRNSKRLIALISAIGMSIFLQNYVSLTEGSRDVALPSLFNGQWVVGHSENFSASITTMQAVIWIVTFLAMLALTIFIRYSRMGRACRACAEDLKMASLLGINTDRVIALTFVIGAAMAAVAGVLLGQFYGVINPYIGFMAGMKAFTAAVLGGIGSIPGAMIGGLILGIAEALSSAYLSTEYKDVVSFALLILVLLVMPTGILGRPEVEKV.

Over 1–21 (MSEQFLYFLQQMFNGVTLGST) the chain is Cytoplasmic. Residues 22-42 (YALIAIGYTMVYGIIGMINFA) traverse the membrane as a helical segment. Residues 43–45 (HGE) lie on the Periplasmic side of the membrane. The helical transmembrane segment at 46-66 (VYMIGSYVSFMIIAALMMMGI) threads the bilayer. Topologically, residues 67 to 68 (DT) are cytoplasmic. The chain crosses the membrane as a helical span at residues 69 to 89 (GWLLVAAGFVGAIVIASAYGW). Topologically, residues 90–104 (SIERVAYRPVRNSKR) are periplasmic. The chain crosses the membrane as a helical span at residues 105–125 (LIALISAIGMSIFLQNYVSLT). Over 126 to 154 (EGSRDVALPSLFNGQWVVGHSENFSASIT) the chain is Cytoplasmic. The helical transmembrane segment at 155–175 (TMQAVIWIVTFLAMLALTIFI) threads the bilayer. Over 176–203 (RYSRMGRACRACAEDLKMASLLGINTDR) the chain is Periplasmic. A helical membrane pass occupies residues 204-224 (VIALTFVIGAAMAAVAGVLLG). The Cytoplasmic portion of the chain corresponds to 225-245 (QFYGVINPYIGFMAGMKAFTA). Residues 246-266 (AVLGGIGSIPGAMIGGLILGI) form a helical membrane-spanning segment. Residues 267–280 (AEALSSAYLSTEYK) are Periplasmic-facing. A helical transmembrane segment spans residues 281–301 (DVVSFALLILVLLVMPTGILG). Topologically, residues 302-308 (RPEVEKV) are cytoplasmic.

It belongs to the binding-protein-dependent transport system permease family. LivHM subfamily.

It localises to the cell inner membrane. In terms of biological role, part of the binding-protein-dependent transport system for branched-chain amino acids. Probably responsible for the translocation of the substrates across the membrane. The chain is High-affinity branched-chain amino acid transport system permease protein LivH (livH) from Escherichia coli O157:H7.